A 225-amino-acid polypeptide reads, in one-letter code: Suppressor of cytokine signaling 3 (225 aa).

Positions 22–33 are kinase inhibitory region (KIR); it reads LKTFSSKSEYQL. The segment at 34 to 45 is extended SH2 subdomain (ESS); that stretch reads VVNAVRKLQESG. The 97-residue stretch at 46–142 folds into the SH2 domain; sequence FYWSAVTGGE…APSFSLPPTE (97 aa). Residues 141–160 form a disordered region; it reads TEPSFEVQEQPPAQALPGGT. The SOCS box domain maps to 177-224; the sequence is VLSRPLSSNVATLQHLCRKTVNGHLDSYEKVTQLPGPIREFLDQYDAP.

Interacts with multiple activated proteins of the tyrosine kinase signaling pathway including IGF1 receptor, insulin receptor and JAK2. Binding to JAK2 is mediated through the KIR and SH2 domains to a phosphorylated tyrosine residue within the JAK2 JH1 domain. Binds specific activated tyrosine residues of the leptin, EPO, IL12, GSCF and gp130 receptors. Interaction with CSNK1E stabilize SOCS3 protein. Component of the probable ECS(SOCS3) E3 ubiquitin-protein ligase complex which contains CUL5, RNF7/RBX2, Elongin BC complex and SOCS3. Interacts with CUL5, RNF7, ELOB and ELOC. Interacts with FGFR3. Interacts with INSR. Interacts with BCL10; this interaction may interfere with BCL10-binding with PELI2. Interacts with NOD2 (via CARD domain); the interaction promotes NOD2 degradation. In terms of processing, phosphorylated on tyrosine residues after stimulation by the cytokines, IL-2, EPO or IGF1.

It participates in protein modification; protein ubiquitination. Functionally, SOCS family proteins form part of a classical negative feedback system that regulates cytokine signal transduction. SOCS3 is involved in negative regulation of cytokines that signal through the JAK/STAT pathway. Inhibits cytokine signal transduction by binding to tyrosine kinase receptors including IL6ST/gp130, LIF, erythropoietin, insulin, IL12, GCSF and leptin receptors. Binding to JAK2 inhibits its kinase activity and regulates IL6 signaling. Suppresses fetal liver erythropoiesis. Regulates onset and maintenance of allergic responses mediated by T-helper type 2 cells. Probable substrate recognition component of a SCF-like ECS (Elongin BC-CUL2/5-SOCS-box protein) E3 ubiquitin-protein ligase complex which mediates the ubiquitination and subsequent proteasomal degradation of target proteins. This is Suppressor of cytokine signaling 3 from Rattus norvegicus (Rat).